We begin with the raw amino-acid sequence, 541 residues long: 2-hydroxyacylsphingosine 1-beta-galactosyltransferase (541 aa).

The first 20 residues, 1–20 (MKSYTPYFMLLWSAVGIARA), serve as a signal peptide directing secretion. N-linked (GlcNAc...) asparagine glycosylation is found at asparagine 78, asparagine 333, and asparagine 442. The helical transmembrane segment at 472 to 492 (YFLLDIAFVLLLGAVLLYFIL) threads the bilayer. A disordered region spans residues 518–541 (HYQNGIRNGKYKGNGRVKHEKKVR). The segment covering 526–541 (GKYKGNGRVKHEKKVR) has biased composition (basic residues).

It belongs to the UDP-glycosyltransferase family.

It localises to the membrane. The protein localises to the endoplasmic reticulum. The enzyme catalyses an N-acylsphing-4-enine + UDP-alpha-D-galactose = a beta-D-galactosyl-(1&lt;-&gt;1')-N-acylsphing-4-enine + UDP + H(+). It carries out the reaction N-(2-hydroxy-hexanoyl)-sphing-4-enine + UDP-alpha-D-galactose = N-(2-hydroxy-hexanoyl)-beta-D-galactosyl-sphing-4-enine + UDP + H(+). It catalyses the reaction N-(2-hydroxy-hexanoyl)-sphinganine + UDP-alpha-D-galactose = N-(2-hydroxyhexanoyl)-beta-D-galactosylsphinganine + UDP + H(+). The catalysed reaction is an N-acyl-sphingoid base + UDP-alpha-D-galactose = a D-galactosylceramide + UDP + H(+). It functions in the pathway sphingolipid metabolism; galactosylceramide biosynthesis. Catalyzes the transfer of galactose to ceramide, a key enzymatic step in the biosynthesis of galactocerebrosides, which are abundant sphingolipids of the myelin membrane of the central nervous system and peripheral nervous system. Galactosylates both hydroxy- and non-hydroxy fatty acid-containing ceramides and diglycerides. The protein is 2-hydroxyacylsphingosine 1-beta-galactosyltransferase of Mus musculus (Mouse).